The following is an 804-amino-acid chain: Leucine--tRNA ligase (804 aa).

The 'HIGH' region signature appears at 40–51; sequence PYPSGAGLHVGH. The 'KMSKS' region motif lies at 576-580; it reads KMSKS. Lys-579 provides a ligand contact to ATP.

It belongs to the class-I aminoacyl-tRNA synthetase family.

Its subcellular location is the cytoplasm. It catalyses the reaction tRNA(Leu) + L-leucine + ATP = L-leucyl-tRNA(Leu) + AMP + diphosphate. This Staphylococcus aureus (strain MRSA252) protein is Leucine--tRNA ligase.